Here is a 370-residue protein sequence, read N- to C-terminus: MDGVKANQRQQLQLLLVAARHQLSRSDLRSMIQFLENEDCGFNVTLQMADPSEQPELLELHRLVATPALIKLSPTPKQVFAGSSIFQQLQNWITRWQQDIVVTGLGLSLRPTELDGSRTQRELQLEDQLLVLRQENETLIDRLNAQERTLRMVAHELRTPLTAAVLALQSQQLGQINIEHFQDVVKRRLDEIELLSKDLLEVKSTKWEDLFNPQNLDLGNIAAEAILELEKLWLDRNIEIRTDIPSDLPKVFADQRRMRQVLLNLLENALKFTEDGGEVSLTMLHRTSHWVQVSICDNGPGIPEDEQERIFLDRVRLPQTSVSTSGFGVGLSVCRRIVEVHGGKIWVVSEPDKGACFYLTVPVWQRNGQE.

Positions 152–365 (MVAHELRTPL…CFYLTVPVWQ (214 aa)) constitute a Histidine kinase domain. Residue histidine 155 is modified to Phosphohistidine; by autocatalysis.

Homooligomerizes. Interacts with KaiC. Participates in the KaiBC complex, whose core is composed of a KaiC homohexamer and 6 KaiB.

The enzyme catalyses ATP + protein L-histidine = ADP + protein N-phospho-L-histidine.. Its function is as follows. Member of the two-component regulatory system SasA/RpaA involved in genome-wide circadian gene expression. One of several clock output pathways. Participates in the Kai clock protein complex, the main circadian regulator in cyanobacteria, via its interaction with KaiC. KaiC enhances the autophosphorylation activity of SasA, which then transfers its phosphate group to RpaA to activate it. In addition to its output function, recruits fold-shifted KaiB (KaiB(fs)) to KaiC to cooperatively form the KaiB(6):KaiC(6) complex (independent of SasA kinase activity). Required for robustness of the circadian rhythm of gene expression and is involved in clock output, also required for adaptation to light/dark cycles. In Prochlorococcus marinus (strain MIT 9313), this protein is Adaptive-response sensory kinase SasA.